The sequence spans 140 residues: uncharacterized protein (140 aa).

One can recognise a VOC domain in the interval 4–127; the sequence is TLTHLALHVP…AGNYVEFSYG (124 aa).

This is an uncharacterized protein from Pseudomonas aeruginosa (strain ATCC 15692 / DSM 22644 / CIP 104116 / JCM 14847 / LMG 12228 / 1C / PRS 101 / PAO1).